The sequence spans 335 residues: Nucleoid-associated protein Ent638_2782 (335 aa).

Belongs to the YejK family.

Its subcellular location is the cytoplasm. It localises to the nucleoid. The protein is Nucleoid-associated protein Ent638_2782 of Enterobacter sp. (strain 638).